A 725-amino-acid chain; its full sequence is Homeobox-leucine zipper protein HDG3 (725 aa).

Positions 1 to 74 are disordered; that stretch reads MSQSNMVPVA…PRHKKKKYNR (74 aa). Residues 11–40 are compositionally biased toward low complexity; sequence NNGDNNNDNENNNNNNNNGGTDNTNAGNDS. The span at 46-64 shows a compositional bias: polar residues; the sequence is DSGNTSSGNHGEGLGNNQA. Positions 65–74 are enriched in basic residues; sequence PRHKKKKYNR. The homeobox DNA-binding region spans 68 to 127; sequence KKKKYNRHTQLQISEMEAFFRECPHPDDKQRYDLSAQLGLDPVQIKFWFQNKRTQNKNQQ. The stretch at 117-201 forms a coiled coil; the sequence is QNKRTQNKNQ…SVTAEKISRL (85 aa). Residues 243-475 form the START domain; sequence DANTKPIIME…LVRQCERISS (233 aa).

This sequence belongs to the HD-ZIP homeobox family. Class IV subfamily. In terms of assembly, interacts with AIL7/PLT7, ANT, BBM and AIL1. As to expression, expressed in siliques.

The protein resides in the nucleus. In terms of biological role, probable transcription factor. Seems to promote cell differentiation. In Arabidopsis thaliana (Mouse-ear cress), this protein is Homeobox-leucine zipper protein HDG3.